The sequence spans 296 residues: Bifunctional protein FolD 1/3 (296 aa).

NADP(+) contacts are provided by residues 166-168 (GRS), Ser-191, and Ile-232.

It belongs to the tetrahydrofolate dehydrogenase/cyclohydrolase family. Homodimer.

The enzyme catalyses (6R)-5,10-methylene-5,6,7,8-tetrahydrofolate + NADP(+) = (6R)-5,10-methenyltetrahydrofolate + NADPH. The catalysed reaction is (6R)-5,10-methenyltetrahydrofolate + H2O = (6R)-10-formyltetrahydrofolate + H(+). Its pathway is one-carbon metabolism; tetrahydrofolate interconversion. In terms of biological role, catalyzes the oxidation of 5,10-methylenetetrahydrofolate to 5,10-methenyltetrahydrofolate and then the hydrolysis of 5,10-methenyltetrahydrofolate to 10-formyltetrahydrofolate. This chain is Bifunctional protein FolD 1/3, found in Ruegeria pomeroyi (strain ATCC 700808 / DSM 15171 / DSS-3) (Silicibacter pomeroyi).